The sequence spans 70 residues: Pyruvate-flavodoxin oxidoreductase (70 aa).

It belongs to the pyruvate:ferredoxin/flavodoxin oxidoreductase family.

It catalyses the reaction oxidized [flavodoxin] + pyruvate + CoA + 2 H(+) = reduced [flavodoxin] + acetyl-CoA + CO2. Oxidoreductase required for the transfer of electrons from pyruvate to flavodoxin, which reduces nitrogenase. The protein is Pyruvate-flavodoxin oxidoreductase (nifJ) of Anabaena variabilis.